A 119-amino-acid chain; its full sequence is MARVSRGVQAHAKHKKILKKAKGYYGARSKVYRVAKQAVIKAGQYAYRDRRQRRRKFRRLWIVRINAEARNNGLSYSRMIDGISKADIEIDRKVLSDIAIFDKTAFAKIADQAKQALVV.

It belongs to the bacterial ribosomal protein bL20 family.

Binds directly to 23S ribosomal RNA and is necessary for the in vitro assembly process of the 50S ribosomal subunit. It is not involved in the protein synthesizing functions of that subunit. This is Large ribosomal subunit protein bL20 from Ruthia magnifica subsp. Calyptogena magnifica.